Consider the following 295-residue polypeptide: Glutamate-binding protein GluB (295 aa).

The signal sequence occupies residues 1–26 (MSAKRTFTRIGAILGATALAGVTLTA). Cysteine 27 carries N-palmitoyl cysteine lipidation. Cysteine 27 is lipidated: S-diacylglycerol cysteine.

This sequence belongs to the bacterial solute-binding protein 3 family. As to quaternary structure, the complex is composed of two ATP-binding proteins (GluA), two transmembrane proteins (GluC and GluD) and a solute-binding protein (GluB).

The protein resides in the cell membrane. Binding of glutamate or asparatate induces a higher thermal stability of the protein structure. In terms of biological role, part of the ABC transporter complex GluABCD involved in glutamate uptake. Binds glutamate with a high affinity. Also binds aspartate with high affinity, suggesting that GluB could be involved in the transport of both amino acid residues into the cell. In Corynebacterium glutamicum (strain ATCC 13032 / DSM 20300 / JCM 1318 / BCRC 11384 / CCUG 27702 / LMG 3730 / NBRC 12168 / NCIMB 10025 / NRRL B-2784 / 534), this protein is Glutamate-binding protein GluB.